We begin with the raw amino-acid sequence, 202 residues long: Tetranectin (202 aa).

The signal sequence occupies residues 1–21 (MELWGPCVLLCLFSLLTQVTA). 3 disulfide bridges follow: Cys-71/Cys-81, Cys-98/Cys-197, and Cys-173/Cys-189. The 122-residue stretch at 77 to 198 (VHMKCFLAFV…CRDKLPYVCQ (122 aa)) folds into the C-type lectin domain.

Homotrimer.

Its subcellular location is the secreted. Its function is as follows. Tetranectin binds to plasminogen and to isolated kringle 4. May be involved in the packaging of molecules destined for exocytosis. Plays a role in retinal function. The sequence is that of Tetranectin (CLEC3B) from Bos taurus (Bovine).